Reading from the N-terminus, the 66-residue chain is Toxin Os1 (66 aa).

An LCN-type CS-alpha/beta domain is found at 2-66 (RDGYIVQLHN…PIKWLDPKCY (65 aa)). 4 cysteine pairs are disulfide-bonded: Cys-12/Cys-65, Cys-16/Cys-37, Cys-22/Cys-47, and Cys-26/Cys-49.

The protein belongs to the long (4 C-C) scorpion toxin superfamily. Sodium channel inhibitor family. Alpha subfamily. As to expression, expressed by the venom gland.

It is found in the secreted. Functionally, alpha toxins bind voltage-independently at site-3 of sodium channels (Nav) and inhibit the inactivation of the activated channels, thereby blocking neuronal transmission. This toxin possesses a high paralytic activity against mice. The protein is Toxin Os1 of Orthochirus scrobiculosus (Central Asian scorpion).